Reading from the N-terminus, the 499-residue chain is MKEFQVYLELDRSLQHDFLYPLIFREYIYALAYDHGLNSSILVENLGYDNKSSLLIVKRLITRMYQQNHLILSANDSNKNQFWGYNKNLYSQIISEGFAVSVEIPFSLQLISSLEEAEIVKSYNLRSIHSIFPFFEEKFPYLNYVSDVRIPYPIHLEILVQTLRYWVKDASSFHLLRLFLYEYCNWNSLITPKKWISTFSKSNPRLFLFLYNFYVCEYESILIFLRNKSSYLRLTSSGVLFERIYFYAKIEHRVEVFDKDFPSTLWFFKDPFIHYVRYQGKSILSSRNTPFFMNKWKYYLIHLWQCHFYVWSQPGKIHINQLSEHSFYFLGYFSNVRLNPSVVRSQMLENSFIIENVMKKLDTTIPIIPLIRSLAKAKFCNVLGHPISKPVWADSSDFDIIDRFLRICRNLSHYYNGSSNKKSLYRIKYILRLSCIKTLARKHKSTVRVFLKRLGSKFLEEFFTEEEEILSLILPRASFTLQRLYRGRIWYLDIFYFHH.

The protein belongs to the intron maturase 2 family. MatK subfamily.

The protein localises to the plastid. The protein resides in the chloroplast. In terms of biological role, usually encoded in the trnK tRNA gene intron. Probably assists in splicing its own and other chloroplast group II introns. The chain is Maturase K from Gleditsia triacanthos (Common honey-locust).